The chain runs to 175 residues: NADH-ubiquinone oxidoreductase chain 6 (175 aa).

A run of 5 helical transmembrane segments spans residues 1–21, 25–45, 47–67, 88–108, and 149–169; these read MMTY…VGFS, SPIY…GIVL, FGGS…MLVV, AVLG…CYIL, and YGTW…LVIM.

This sequence belongs to the complex I subunit 6 family. In terms of assembly, core subunit of respiratory chain NADH dehydrogenase (Complex I) which is composed of 45 different subunits.

Its subcellular location is the mitochondrion inner membrane. The enzyme catalyses a ubiquinone + NADH + 5 H(+)(in) = a ubiquinol + NAD(+) + 4 H(+)(out). Functionally, core subunit of the mitochondrial membrane respiratory chain NADH dehydrogenase (Complex I) which catalyzes electron transfer from NADH through the respiratory chain, using ubiquinone as an electron acceptor. Essential for the catalytic activity and assembly of complex I. This is NADH-ubiquinone oxidoreductase chain 6 (MT-ND6) from Phoca vitulina (Harbor seal).